Reading from the N-terminus, the 195-residue chain is MSSKEQKTPDEQVLDQKEAAKGQQADAAPETADVADPRDERIAELEAQLSELQQRERDNMLRVRAEADNVRRRAEMDIEKAHKFAVEKFASEMLPVIDNLERALDTADKANESLAAMIEGVELTLKSLLDAVHKFGIEVVGDVGVPFNPEVHQAMTMLPSADHQPNHVMMVMQKGYTLNGRLLRPAMVAVSKAQD.

Positions 1–20 (MSSKEQKTPDEQVLDQKEAA) are enriched in basic and acidic residues. Residues 1–40 (MSSKEQKTPDEQVLDQKEAAKGQQADAAPETADVADPRDE) are disordered.

Belongs to the GrpE family. Homodimer.

Its subcellular location is the cytoplasm. Participates actively in the response to hyperosmotic and heat shock by preventing the aggregation of stress-denatured proteins, in association with DnaK and GrpE. It is the nucleotide exchange factor for DnaK and may function as a thermosensor. Unfolded proteins bind initially to DnaJ; upon interaction with the DnaJ-bound protein, DnaK hydrolyzes its bound ATP, resulting in the formation of a stable complex. GrpE releases ADP from DnaK; ATP binding to DnaK triggers the release of the substrate protein, thus completing the reaction cycle. Several rounds of ATP-dependent interactions between DnaJ, DnaK and GrpE are required for fully efficient folding. This is Protein GrpE from Pectobacterium atrosepticum (strain SCRI 1043 / ATCC BAA-672) (Erwinia carotovora subsp. atroseptica).